The sequence spans 131 residues: Aspartate 1-decarboxylase (131 aa).

The active-site Schiff-base intermediate with substrate; via pyruvic acid is Ser25. Ser25 is subject to Pyruvic acid (Ser). Thr57 contacts substrate. The active-site Proton donor is Tyr58. Substrate is bound at residue 73–75 (GAA).

This sequence belongs to the PanD family. In terms of assembly, heterooctamer of four alpha and four beta subunits. Pyruvate serves as cofactor. Is synthesized initially as an inactive proenzyme, which is activated by self-cleavage at a specific serine bond to produce a beta-subunit with a hydroxyl group at its C-terminus and an alpha-subunit with a pyruvoyl group at its N-terminus.

The protein resides in the cytoplasm. It carries out the reaction L-aspartate + H(+) = beta-alanine + CO2. Its pathway is cofactor biosynthesis; (R)-pantothenate biosynthesis; beta-alanine from L-aspartate: step 1/1. In terms of biological role, catalyzes the pyruvoyl-dependent decarboxylation of aspartate to produce beta-alanine. The polypeptide is Aspartate 1-decarboxylase (Chlorobium phaeobacteroides (strain DSM 266 / SMG 266 / 2430)).